A 245-amino-acid polypeptide reads, in one-letter code: Mitochondrial import inner membrane translocase subunit Tim21 (245 aa).

A mitochondrion-targeting transit peptide spans 1–18; the sequence is MICAFLRVVRHAEKLHGS. The interval 64–97 is disordered; sequence FWTQGPDPRKAKEDSSKQVSINRNQREETGVSTS. Positions 70–79 are enriched in basic and acidic residues; that stretch reads DPRKAKEDSS. The helical transmembrane segment at 108 to 128 threads the bilayer; it reads TYLIVVLFGVSITGSLLYTIF.

Belongs to the TIM21 family. Component of the TIM23 complex. Component of the MITRAC (mitochondrial translation regulation assembly intermediate of cytochrome c oxidase complex) complex, the core components of this complex being COA3/MITRAC12 and COX14. Interacts with COA3 and MT-CO1/COX1.

The protein resides in the mitochondrion membrane. In terms of biological role, participates in the translocation of transit peptide-containing proteins across the mitochondrial inner membrane. Also required for assembly of mitochondrial respiratory chain complex I and complex IV as component of the MITRAC (mitochondrial translation regulation assembly intermediate of cytochrome c oxidase complex) complex. Probably shuttles between the presequence translocase and respiratory-chain assembly intermediates in a process that promotes incorporation of early nuclear-encoded subunits into these complexes. The chain is Mitochondrial import inner membrane translocase subunit Tim21 (Timm21) from Rattus norvegicus (Rat).